Reading from the N-terminus, the 1029-residue chain is uncharacterized protein (1029 aa).

Over residues 1–23 (MREWCMLRESRTNTPRRAAERGK) the composition is skewed to basic and acidic residues. The disordered stretch occupies residues 1–31 (MREWCMLRESRTNTPRRAAERGKRPGGSSVR). A Guanylate cyclase domain is found at 39 to 168 (TALCYDLVGS…AALAMAARLQ (130 aa)). Position 261–268 (261–268 (GDAGIGKS)) interacts with ATP.

This is an uncharacterized protein from Rhizobium meliloti (strain 1021) (Ensifer meliloti).